The following is a 469-amino-acid chain: tRNA-2-methylthio-N(6)-dimethylallyladenosine synthase (469 aa).

In terms of domain architecture, MTTase N-terminal spans 27–142 (KKVYIRTFGC…LPQMLAQRAR (116 aa)). Residues cysteine 36, cysteine 73, cysteine 105, cysteine 179, cysteine 183, and cysteine 186 each coordinate [4Fe-4S] cluster. Residues 165–398 (KVDGAAAFVS…QATIEDNVRR (234 aa)) enclose the Radical SAM core domain. Positions 401 to 467 (ERRVGTVQRV…PHSLRGEPVL (67 aa)) constitute a TRAM domain.

This sequence belongs to the methylthiotransferase family. MiaB subfamily. As to quaternary structure, monomer. Requires [4Fe-4S] cluster as cofactor.

It is found in the cytoplasm. It catalyses the reaction N(6)-dimethylallyladenosine(37) in tRNA + (sulfur carrier)-SH + AH2 + 2 S-adenosyl-L-methionine = 2-methylsulfanyl-N(6)-dimethylallyladenosine(37) in tRNA + (sulfur carrier)-H + 5'-deoxyadenosine + L-methionine + A + S-adenosyl-L-homocysteine + 2 H(+). Its function is as follows. Catalyzes the methylthiolation of N6-(dimethylallyl)adenosine (i(6)A), leading to the formation of 2-methylthio-N6-(dimethylallyl)adenosine (ms(2)i(6)A) at position 37 in tRNAs that read codons beginning with uridine. The polypeptide is tRNA-2-methylthio-N(6)-dimethylallyladenosine synthase (Leptothrix cholodnii (strain ATCC 51168 / LMG 8142 / SP-6) (Leptothrix discophora (strain SP-6))).